A 404-amino-acid chain; its full sequence is MIHQPPAGARDLLPLEVAQKAWINDNLQRVFQQWGYQRIVTSTLEWLETLTAGGAVDRTKVIQLQTAESQALGLRPELTASIARAAVTRMAENTFPQRLCYRANVFRHPPRGSHGKQMEFYQAGVELLFAAGIVADAEILLLLADSLDALGLEDWQLILGEAALGRSLLDPFPEPVRETVRHCVANLDRVGLQELPLDEDLKAYALDIFDLRGEPETILARVSQFDLGPEAQEIVANLKALFALLAGSTQKQLPIILDLTLIQTFDYYTGIVFEVVNFANHQSYILGQGGRYDQLLGLYHPQRENHPGIGFCLNIEELHTCLLTSPQLPKQLAGSAWLVIATEPNAQQQVFHYAQTLRQGDEMVRVEVELGGRSPAEIYAYARSSHITHLAWIDPSGEPKLETL.

Belongs to the class-II aminoacyl-tRNA synthetase family. HisZ subfamily. As to quaternary structure, heteromultimer composed of HisG and HisZ subunits.

The protein resides in the cytoplasm. The protein operates within amino-acid biosynthesis; L-histidine biosynthesis; L-histidine from 5-phospho-alpha-D-ribose 1-diphosphate: step 1/9. Functionally, required for the first step of histidine biosynthesis. May allow the feedback regulation of ATP phosphoribosyltransferase activity by histidine. This chain is ATP phosphoribosyltransferase regulatory subunit, found in Picosynechococcus sp. (strain ATCC 27264 / PCC 7002 / PR-6) (Agmenellum quadruplicatum).